Here is a 198-residue protein sequence, read N- to C-terminus: Nudix hydrolase 21, chloroplastic (198 aa).

The transit peptide at Met-1–Pro-37 directs the protein to the chloroplast. The region spanning Gly-59–Ile-191 is the Nudix hydrolase domain. Residues Gly-98–Gly-119 carry the Nudix box motif. Residues Glu-113 and Glu-117 each contribute to the Mg(2+) site.

Belongs to the Nudix hydrolase family. The cofactor is Mg(2+). Mn(2+) serves as cofactor. As to expression, expressed in roots, leaves, stems and inflorescences.

It is found in the plastid. Its subcellular location is the chloroplast. Probably mediates the hydrolysis of some nucleoside diphosphate derivatives. In Arabidopsis thaliana (Mouse-ear cress), this protein is Nudix hydrolase 21, chloroplastic (NUDT21).